The following is a 398-amino-acid chain: Bifunctional enzyme IspD/IspF (398 aa).

The interval 1–234 (MTNSPRTAAI…SRLMAALGDI (234 aa)) is 2-C-methyl-D-erythritol 4-phosphate cytidylyltransferase. A 2-C-methyl-D-erythritol 2,4-cyclodiphosphate synthase region spans residues 235–398 (RTGTGYDVHA…LPWGADGLAG (164 aa)). Positions 241 and 243 each coordinate a divalent metal cation. Residues 241-243 (DVH) and 267-268 (HS) contribute to the 4-CDP-2-C-methyl-D-erythritol 2-phosphate site. Position 275 (His275) interacts with a divalent metal cation. 4-CDP-2-C-methyl-D-erythritol 2-phosphate-binding positions include 289–291 (DIG), 365–368 (TTSE), Phe372, and Arg375.

This sequence in the N-terminal section; belongs to the IspD/TarI cytidylyltransferase family. IspD subfamily. It in the C-terminal section; belongs to the IspF family. A divalent metal cation serves as cofactor.

The catalysed reaction is 2-C-methyl-D-erythritol 4-phosphate + CTP + H(+) = 4-CDP-2-C-methyl-D-erythritol + diphosphate. The enzyme catalyses 4-CDP-2-C-methyl-D-erythritol 2-phosphate = 2-C-methyl-D-erythritol 2,4-cyclic diphosphate + CMP. It participates in isoprenoid biosynthesis; isopentenyl diphosphate biosynthesis via DXP pathway; isopentenyl diphosphate from 1-deoxy-D-xylulose 5-phosphate: step 2/6. The protein operates within isoprenoid biosynthesis; isopentenyl diphosphate biosynthesis via DXP pathway; isopentenyl diphosphate from 1-deoxy-D-xylulose 5-phosphate: step 4/6. Bifunctional enzyme that catalyzes the formation of 4-diphosphocytidyl-2-C-methyl-D-erythritol from CTP and 2-C-methyl-D-erythritol 4-phosphate (MEP) (IspD), and catalyzes the conversion of 4-diphosphocytidyl-2-C-methyl-D-erythritol 2-phosphate (CDP-ME2P) to 2-C-methyl-D-erythritol 2,4-cyclodiphosphate (ME-CPP) with a corresponding release of cytidine 5-monophosphate (CMP) (IspF). This is Bifunctional enzyme IspD/IspF from Rhodopseudomonas palustris (strain TIE-1).